Consider the following 645-residue polypeptide: Meiosis induction protein kinase IME2/SME1 (645 aa).

The segment at M1–N24 is disordered. A compositionally biased stretch (low complexity) spans Q8–S17. The 349-residue stretch at Y38 to F386 folds into the Protein kinase domain. Residues L44–V52 and K67 contribute to the ATP site. The Proton acceptor role is filled by D193.

Belongs to the protein kinase superfamily. Ser/Thr protein kinase family.

It catalyses the reaction L-seryl-[protein] + ATP = O-phospho-L-seryl-[protein] + ADP + H(+). The enzyme catalyses L-threonyl-[protein] + ATP = O-phospho-L-threonyl-[protein] + ADP + H(+). Protein kinase which is essential for the initiation of meiosis and sporulation. The protein is Meiosis induction protein kinase IME2/SME1 (IME2) of Saccharomyces cerevisiae (strain ATCC 204508 / S288c) (Baker's yeast).